The following is a 216-amino-acid chain: Peptide methionine sulfoxide reductase MsrA (216 aa).

Cys54 is an active-site residue.

It belongs to the MsrA Met sulfoxide reductase family.

The catalysed reaction is L-methionyl-[protein] + [thioredoxin]-disulfide + H2O = L-methionyl-(S)-S-oxide-[protein] + [thioredoxin]-dithiol. It catalyses the reaction [thioredoxin]-disulfide + L-methionine + H2O = L-methionine (S)-S-oxide + [thioredoxin]-dithiol. Functionally, has an important function as a repair enzyme for proteins that have been inactivated by oxidation. Catalyzes the reversible oxidation-reduction of methionine sulfoxide in proteins to methionine. The polypeptide is Peptide methionine sulfoxide reductase MsrA (Xylella fastidiosa (strain Temecula1 / ATCC 700964)).